The following is a 300-amino-acid chain: HTH-type transcriptional regulator ArgP (300 aa).

The 57-residue stretch at 4–60 (FDYKLLAALAAVVEQGGFERAAQALGLSQSAVSQRIKLLEARVGQPVLVRETPPHPT) folds into the HTH lysR-type domain. The H-T-H motif DNA-binding region spans 21–40 (FERAAQALGLSQSAVSQRIK).

This sequence belongs to the LysR transcriptional regulatory family. As to quaternary structure, homodimer.

In terms of biological role, controls the transcription of genes involved in arginine and lysine metabolism. The polypeptide is HTH-type transcriptional regulator ArgP (Pseudomonas aeruginosa (strain UCBPP-PA14)).